The primary structure comprises 412 residues: Probable tRNA sulfurtransferase (412 aa).

The region spanning 58–163 is the THUMP domain; that stretch reads DEVIKQLGYV…SEGTYIYVGK (106 aa). ATP-binding positions include 181–182, 206–207, arginine 265, glycine 287, and glutamine 296; these read ML and HF.

It belongs to the ThiI family.

It localises to the cytoplasm. The enzyme catalyses [ThiI sulfur-carrier protein]-S-sulfanyl-L-cysteine + a uridine in tRNA + 2 reduced [2Fe-2S]-[ferredoxin] + ATP + H(+) = [ThiI sulfur-carrier protein]-L-cysteine + a 4-thiouridine in tRNA + 2 oxidized [2Fe-2S]-[ferredoxin] + AMP + diphosphate. It catalyses the reaction [ThiS sulfur-carrier protein]-C-terminal Gly-Gly-AMP + S-sulfanyl-L-cysteinyl-[cysteine desulfurase] + AH2 = [ThiS sulfur-carrier protein]-C-terminal-Gly-aminoethanethioate + L-cysteinyl-[cysteine desulfurase] + A + AMP + 2 H(+). The protein operates within cofactor biosynthesis; thiamine diphosphate biosynthesis. Its function is as follows. Catalyzes the ATP-dependent transfer of a sulfur to tRNA to produce 4-thiouridine in position 8 of tRNAs, which functions as a near-UV photosensor. Also catalyzes the transfer of sulfur to the sulfur carrier protein ThiS, forming ThiS-thiocarboxylate. This is a step in the synthesis of thiazole, in the thiamine biosynthesis pathway. The sulfur is donated as persulfide by IscS. The polypeptide is Probable tRNA sulfurtransferase (Acholeplasma laidlawii (strain PG-8A)).